The chain runs to 213 residues: Uridine kinase (213 aa).

Position 15 to 22 (15 to 22 (GASASGKS)) interacts with ATP.

Belongs to the uridine kinase family.

It is found in the cytoplasm. It catalyses the reaction uridine + ATP = UMP + ADP + H(+). The catalysed reaction is cytidine + ATP = CMP + ADP + H(+). It functions in the pathway pyrimidine metabolism; CTP biosynthesis via salvage pathway; CTP from cytidine: step 1/3. It participates in pyrimidine metabolism; UMP biosynthesis via salvage pathway; UMP from uridine: step 1/1. In Erwinia tasmaniensis (strain DSM 17950 / CFBP 7177 / CIP 109463 / NCPPB 4357 / Et1/99), this protein is Uridine kinase.